The sequence spans 246 residues: TLC domain-containing protein 2 (246 aa).

The next 6 helical transmembrane spans lie at 5–25 (SVIL…YGLG), 43–63 (ISTS…CFCM), 79–99 (SHAL…DMVI), 107–127 (WELL…VLTC), 128–148 (RYVG…FLHL), and 199–219 (FSYT…IVLF). Positions 35–231 (RNAWKWNNIS…LMRSDFMKAS (197 aa)) constitute a TLC domain.

Belongs to the TLCD family.

Its subcellular location is the cell membrane. Regulates the composition and fluidity of the plasma membrane. Inhibits the incorporation of membrane-fluidizing phospholipids containing omega-3 long-chain polyunsaturated fatty acids (LCPUFA) and thereby promotes membrane rigidity. Does not appear to have any effect on LCPUFA synthesis. The sequence is that of TLC domain-containing protein 2 (tlcd2) from Danio rerio (Zebrafish).